A 614-amino-acid chain; its full sequence is Acid phosphatase (614 aa).

A signal peptide spans 1 to 22 (MKGTAASALLVALSATAAQARP). One can recognise a Fibronectin type-III domain in the interval 80–176 (IPKGMHIHYQ…EVLSFKTSRP (97 aa)). N-linked (GlcNAc...) asparagine glycosylation is found at Asn-110, Asn-161, Asn-242, Asn-295, Asn-333, Asn-340, Asn-352, Asn-408, Asn-429, Asn-512, Asn-523, Asn-559, and Asn-578. Positions 606-614 (VAGGKKLHS) are excised as a propeptide.

As to quaternary structure, monomer. Requires Cu cation as cofactor. Post-translationally, glycosylated; probably with N-linked high-mannose oligosaccharides.

The protein localises to the secreted. It catalyses the reaction a phosphate monoester + H2O = an alcohol + phosphate. With respect to regulation, competitively inhibited by phosphomycin and inorganic orthophosphate. This Aspergillus ficuum protein is Acid phosphatase (aphA).